The following is a 278-amino-acid chain: Large ribosomal subunit protein uL2 (278 aa).

2 disordered regions span residues 27 to 57 and 224 to 278; these read STPEKSLVRPLHSKGGRNNAGRVTVRHQGGG and VAMN…NKKR. The segment covering 258-278 has biased composition (basic residues); sequence RSPKKASSKYIVRRRKTNKKR.

This sequence belongs to the universal ribosomal protein uL2 family. As to quaternary structure, part of the 50S ribosomal subunit. Forms a bridge to the 30S subunit in the 70S ribosome.

In terms of biological role, one of the primary rRNA binding proteins. Required for association of the 30S and 50S subunits to form the 70S ribosome, for tRNA binding and peptide bond formation. It has been suggested to have peptidyltransferase activity; this is somewhat controversial. Makes several contacts with the 16S rRNA in the 70S ribosome. The sequence is that of Large ribosomal subunit protein uL2 from Streptomyces avermitilis (strain ATCC 31267 / DSM 46492 / JCM 5070 / NBRC 14893 / NCIMB 12804 / NRRL 8165 / MA-4680).